Reading from the N-terminus, the 241-residue chain is Methylcarbamoylase mom (241 aa).

3 residues coordinate Fe cation: Tyr59, Asp149, and Tyr159.

This sequence belongs to the mulikevirus mom protein family. It depends on Fe(2+) as a cofactor. The cofactor is Fe(3+).

It is found in the host cytoplasm. The enzyme catalyses a 2'-deoxyadenosine in DNA + acetyl-CoA + AH2 + NH4(+) + O2 = a N(6)-methylcarbamoyl-2'-deoxyadenosine in DNA + A + CoA + 2 H2O + H(+). Iron-binding protein that performs methylcarbamoylation of adenine using acetyl CoA. This chemical modificaltion makes the viral DNA resistant to a variety of host type I and type II restriction enzymes by modifying approximately 15% of DNA adenine residues. The modification called momylation changes adenine for N6-methylcarbamoyl adenine and occurs just before packaging. Target sequences are 5'-(C or G)-A-(Cor G)-N-(C or T)-3'. Also usually modifies adenine residues in the host cellular DNA. This is Methylcarbamoylase mom (mom) from Escherichia phage Mu (Bacteriophage Mu).